The chain runs to 502 residues: Maturase K (502 aa).

The protein belongs to the intron maturase 2 family. MatK subfamily.

Its subcellular location is the plastid. The protein resides in the chloroplast. Usually encoded in the trnK tRNA gene intron. Probably assists in splicing its own and other chloroplast group II introns. This chain is Maturase K, found in Brassica campestris (Field mustard).